A 630-amino-acid chain; its full sequence is CREB-regulated transcription coactivator 1 (630 aa).

Residues S64 and S113 each carry the phosphoserine modification. 4 disordered regions span residues 142–174 (ADTS…GPQD), 187–221 (GMEE…VPGI), 256–331 (SPLP…LSPL), and 356–475 (QAGS…HTST). A Phosphothreonine modification is found at T149. S151 carries the phosphoserine; by SIK1 and SIK2 modification. A compositionally biased stretch (polar residues) spans 151 to 167 (SDSALHQSTMTPTQAES). Phosphothreonine is present on T161. Positions 194-208 (ETDKTLSKQSWDSKK) are enriched in basic and acidic residues. The Nuclear export signal signature appears at 242 to 258 (TGGSLPDLSTIHFPSPL). Pro residues predominate over residues 256 to 270 (SPLPTPLDPEEPPFP). 2 stretches are compositionally biased toward polar residues: residues 292–301 (GMNTPSSSPQ) and 310–331 (LSLS…LSPL). Over residues 361-384 (QPPPQPQPPPPPPPVSQQQPPPPQ) the composition is skewed to pro residues. The segment covering 385-394 (VSVGLPQGGP) has biased composition (low complexity). Composition is skewed to polar residues over residues 414–426 (VPST…TESP) and 450–475 (PATQ…HTST).

The protein belongs to the TORC family. As to quaternary structure, binds, as a tetramer, through its N-terminal region, with the bZIP domain of CREB1. 'Arg-314' in the bZIP domain of CREB1 is essential for this interaction. Interaction, via its C-terminal, with TAF4, enhances recruitment of TAF4 to CREB1. Interacts with 14-3-3 proteins, including YWHAE/14-3-3 epsilon. Interacts with calmodulin-dependent catalytic subunit PPP3CA/calcineurin A. In terms of processing, phosphorylation/dephosphorylation states of Ser-151 are required for regulating transduction of CREB activity. TORCs are inactive when phosphorylated, and active when dephosphorylated at this site. This primary site of phosphorylation is mediated by SIKs (SIK1 and SIK2), is regulated by cAMP and calcium levels and is dependent on the phosphorylation of SIKs by LKB1. As to expression, highly expressed in developing cortical neurons, peaking during dendrite development.

The protein resides in the cytoplasm. Its subcellular location is the nucleus. Transcriptional coactivator for CREB1 which activates transcription through both consensus and variant cAMP response element (CRE) sites. Acts as a coactivator, in the SIK/TORC signaling pathway, being active when dephosphorylated and acts independently of CREB1 'Ser-133' phosphorylation. Enhances the interaction of CREB1 with TAF4. Regulates the expression of specific CREB-activated genes such as the steroidogenic gene, StAR. Potent coactivator of PGC1alpha and inducer of mitochondrial biogenesis in muscle cells. In the hippocampus, involved in late-phase long-term potentiation (L-LTP) maintenance at the Schaffer collateral-CA1 synapses. May be required for dendritic growth of developing cortical neurons. In concert with SIK1, regulates the light-induced entrainment of the circadian clock. In response to light stimulus, coactivates the CREB-mediated transcription of PER1 which plays an important role in the photic entrainment of the circadian clock. This is CREB-regulated transcription coactivator 1 (Crtc1) from Rattus norvegicus (Rat).